Consider the following 461-residue polypeptide: Cysteine--tRNA ligase (461 aa).

Cys28 is a binding site for Zn(2+). The short motif at 30-40 (ITVYDLCHIGH) is the 'HIGH' region element. 3 residues coordinate Zn(2+): Cys209, His234, and Glu238. Residues 266-270 (KMSKS) carry the 'KMSKS' region motif. An ATP-binding site is contributed by Lys269.

Belongs to the class-I aminoacyl-tRNA synthetase family. As to quaternary structure, monomer. Requires Zn(2+) as cofactor.

Its subcellular location is the cytoplasm. The enzyme catalyses tRNA(Cys) + L-cysteine + ATP = L-cysteinyl-tRNA(Cys) + AMP + diphosphate. The chain is Cysteine--tRNA ligase from Escherichia fergusonii (strain ATCC 35469 / DSM 13698 / CCUG 18766 / IAM 14443 / JCM 21226 / LMG 7866 / NBRC 102419 / NCTC 12128 / CDC 0568-73).